A 200-amino-acid chain; its full sequence is Ribosomal RNA large subunit methyltransferase E (200 aa).

Residues G51, W53, D71, D90, and D112 each contribute to the S-adenosyl-L-methionine site. The active-site Proton acceptor is the K151.

Belongs to the class I-like SAM-binding methyltransferase superfamily. RNA methyltransferase RlmE family.

The protein localises to the cytoplasm. The catalysed reaction is uridine(2552) in 23S rRNA + S-adenosyl-L-methionine = 2'-O-methyluridine(2552) in 23S rRNA + S-adenosyl-L-homocysteine + H(+). Its function is as follows. Specifically methylates the uridine in position 2552 of 23S rRNA at the 2'-O position of the ribose in the fully assembled 50S ribosomal subunit. This is Ribosomal RNA large subunit methyltransferase E from Treponema pallidum (strain Nichols).